The chain runs to 819 residues: Protein EFR3 homolog A (819 aa).

Positions 210–230 are disordered; the sequence is DTDSRTGPPASPTTGDKEENP.

Belongs to the EFR3 family. In terms of assembly, component of a phosphatidylinositol 4-kinase (PI4K) complex. Post-translationally, palmitoylated at its N-terminus, anchoring the protein to the plasma membrane.

The protein resides in the cell membrane. Its function is as follows. Component of a complex required to localize phosphatidylinositol 4-kinase (PI4K) to the plasma membrane. The complex acts as a regulator of phosphatidylinositol 4-phosphate (PtdIns(4)P) synthesis. In the complex, efr3a probably acts as the membrane-anchoring component. This chain is Protein EFR3 homolog A (efr3a), found in Xenopus laevis (African clawed frog).